The following is a 204-amino-acid chain: ADP-ribosylation factor-like protein 15 (204 aa).

Residues 39–46, 82–86, and 142–145 each bind GTP; these read GLTGSGKT, ELGGA, and NHQD.

It belongs to the small GTPase superfamily. Arf family.

This chain is ADP-ribosylation factor-like protein 15 (Arl15), found in Mus musculus (Mouse).